The following is a 170-amino-acid chain: Anaphase-promoting complex subunit SWM1 (170 aa).

Basic and acidic residues-rich tracts occupy residues 48 to 67 (NTRTDAEEGRAPQDGERNSN) and 132 to 141 (GANEPRKETI). 2 disordered regions span residues 48–81 (NTRTDAEEGRAPQDGERNSNVRESAQGKALMTSE) and 122–141 (LNGGTNSRNDGANEPRKETI).

The protein belongs to the APC13 family. As to quaternary structure, the APC/C is composed of at least 13 subunits that stay tightly associated throughout the cell cycle: APC1, APC2, APC4, APC5, APC9, APC11, CDC16, CDC23, CDC26, CDC27, DOC1, MND2 and SWM1. SWM1 interacts directly with CDC23 and APC5, and is required to tether APC9, CDC16, CDC26 and CDC27 to the complex.

It functions in the pathway protein modification; protein ubiquitination. In terms of biological role, component of the anaphase promoting complex/cyclosome (APC/C), a cell cycle-regulated E3 ubiquitin-protein ligase complex that controls progression through mitosis and the G1 phase of the cell cycle. The APC/C is thought to confer substrate specificity and, in the presence of ubiquitin-conjugating E2 enzymes, it catalyzes the formation of protein-ubiquitin conjugates that are subsequently degraded by the 26S proteasome. In early mitosis, the APC/C is activated by CDC20 and targets securin PDS1, the B-type cyclin CLB5, and other anaphase inhibitory proteins for proteolysis, thereby triggering the separation of sister chromatids at the metaphase-to-anaphase transition. In late mitosis and in G1, degradation of CLB5 allows activation of the APC/C by CDH1, which is needed to destroy CDC20 and the B-type cyclin CLB2 to allow exit from mitosis and creating the low CDK state necessary for cytokinesis and for reforming prereplicative complexes in G1 prior to another round of replication. SWM1 is required for APC/C activity in meiosis. This Saccharomyces cerevisiae (strain ATCC 204508 / S288c) (Baker's yeast) protein is Anaphase-promoting complex subunit SWM1 (SWM1).